We begin with the raw amino-acid sequence, 156 residues long: Ribonuclease pancreatic (156 aa).

The signal sequence occupies residues M1 to G28. Basic and acidic residues predominate over residues A33–S43. The disordered stretch occupies residues A33 to Y53. Residues K35 and R38 each contribute to the substrate site. The active-site Proton acceptor is the H40. Cystine bridges form between C54/C112, C68/C123, C86/C138, and C93/C100. Residue N62 is glycosylated (N-linked (GlcNAc...) asparagine). Substrate is bound by residues K69 to T73 and K94. Residue N104 is glycosylated (N-linked (GlcNAc...) asparagine). A substrate-binding site is contributed by R113. A glycan (N-linked (GlcNAc...) asparagine) is linked at N116. H147 serves as the catalytic Proton donor.

This sequence belongs to the pancreatic ribonuclease family. In terms of assembly, monomer. Interacts with and forms tight 1:1 complexes with RNH1. Dimerization of two such complexes may occur. Interaction with RNH1 inhibits this protein. In terms of tissue distribution, pancreas and other tissues and body fluids (indicating it may have other physiological functions besides its role in digestion).

It is found in the secreted. It carries out the reaction an [RNA] containing cytidine + H2O = an [RNA]-3'-cytidine-3'-phosphate + a 5'-hydroxy-ribonucleotide-3'-[RNA].. The enzyme catalyses an [RNA] containing uridine + H2O = an [RNA]-3'-uridine-3'-phosphate + a 5'-hydroxy-ribonucleotide-3'-[RNA].. Endonuclease that catalyzes the cleavage of RNA on the 3' side of pyrimidine nucleotides. Acts on single-stranded and double-stranded RNA. The sequence is that of Ribonuclease pancreatic (RNASE1) from Pan troglodytes (Chimpanzee).